A 488-amino-acid polypeptide reads, in one-letter code: Intron-encoded DNA endonuclease I-AniI (488 aa).

The interval 1–169 (MRILKSHPLL…DIVEFIWGGL (169 aa)) is cobA exon 1 encoded. A cobA intron encoded region spans residues 170–488 (YTDEPQCGDV…SEKIKIPSNY (319 aa)).

It in the C-terminal section; belongs to the LAGLIDADG endonuclease family. Homodimer. It depends on Mg(2+) as a cofactor. The mature protein may arise from proteolytic cleavage of an in-frame translation of cobA exon 1 plus intron, containing the I-AniI open reading frame. Cleavage may take place close to Met-213 resulting in an active endonuclease/maturase of about 30 kDa.

It localises to the mitochondrion. Functionally, mitochondrial DNA endonuclease and mRNA maturase involved in intron homing and required for splicing of the cytochrome b (cobA) gene intron, containing its own coding sequence. The protein stimulates the intrinsic ribozyme activity of the intron through binding to and stabilizing specific secondary and tertiary structure elements in the RNA. As an endonuclease it introduces a specific double-strand break at the junction of the two exons the cobA gene and thus mediates the insertion of an intron, containing its own coding sequence (group I intron), into an intronless gene. Recognizes with limited specificity and cleaves the sequence 5'-GAGGAGGTTTCTCTGTA-3'. The proteins RNA and DNA recognition and binding surfaces are independent. The chain is Intron-encoded DNA endonuclease I-AniI (I-AniI) from Emericella nidulans (Aspergillus nidulans).